Consider the following 349-residue polypeptide: Probable FBD-associated F-box protein At5g38565 (349 aa).

The 47-residue stretch at 1 to 47 (MDIFNGLPDDVLVKILSFVPTKVAVSTSILSKRWEFLWMWLPRLDFG) folds into the F-box domain. The FBD domain maps to 263–311 (CWNQPISVPECLLESLQIFNLSHYFGKQQDLDFVVYILKNACHLKTATI).

The polypeptide is Probable FBD-associated F-box protein At5g38565 (Arabidopsis thaliana (Mouse-ear cress)).